Here is a 145-residue protein sequence, read N- to C-terminus: 3-dehydroquinate dehydratase (145 aa).

Tyr23 serves as the catalytic Proton acceptor. 3 residues coordinate substrate: Asn74, His80, and Asp87. His100 (proton donor) is an active-site residue. Substrate is bound by residues 101-102 (LS) and Arg111.

It belongs to the type-II 3-dehydroquinase family. In terms of assembly, homododecamer.

The catalysed reaction is 3-dehydroquinate = 3-dehydroshikimate + H2O. It functions in the pathway metabolic intermediate biosynthesis; chorismate biosynthesis; chorismate from D-erythrose 4-phosphate and phosphoenolpyruvate: step 3/7. Catalyzes a trans-dehydration via an enolate intermediate. The sequence is that of 3-dehydroquinate dehydratase from Bacillus licheniformis (strain ATCC 14580 / DSM 13 / JCM 2505 / CCUG 7422 / NBRC 12200 / NCIMB 9375 / NCTC 10341 / NRRL NRS-1264 / Gibson 46).